The following is a 129-amino-acid chain: Thyroid hormone receptor alpha (129 aa).

An NR LBD domain is found at alanine 26–arginine 129. A 3,3',5-triiodo-L-thyronine-binding site is contributed by arginine 91.

The protein belongs to the nuclear hormone receptor family. NR1 subfamily.

It localises to the nucleus. Its function is as follows. Nuclear hormone receptor that can act as a repressor or activator of transcription. High affinity receptor for thyroid hormones, including triiodothyronine and thyroxine. This chain is Thyroid hormone receptor alpha (thra1), found in Sparus aurata (Gilthead sea bream).